Here is a 164-residue protein sequence, read N- to C-terminus: Thioredoxin domain-containing protein R443 (164 aa).

A helical transmembrane segment spans residues 8–28; it reads HIVLIVLAIILILWIISLLLC. The 128-residue stretch at 36–163 folds into the Thioredoxin domain; that stretch reads YQVPIIQPMQ…LTQFIRSNMN (128 aa). Residues Cys84 and Cys87 are joined by a disulfide bond.

It belongs to the thioredoxin family.

The protein resides in the host membrane. It is found in the virion. This chain is Thioredoxin domain-containing protein R443, found in Acanthamoeba polyphaga mimivirus (APMV).